We begin with the raw amino-acid sequence, 465 residues long: Cysteine--tRNA ligase (465 aa).

C27 is a binding site for Zn(2+). A 'HIGH' region motif is present at residues 29 to 39 (PTVYDFIHIGN). Residues C207, H232, and E236 each contribute to the Zn(2+) site. Residues 264 to 268 (KMSKS) carry the 'KMSKS' region motif. ATP is bound at residue K267.

Belongs to the class-I aminoacyl-tRNA synthetase family. Monomer. Requires Zn(2+) as cofactor.

It localises to the cytoplasm. The catalysed reaction is tRNA(Cys) + L-cysteine + ATP = L-cysteinyl-tRNA(Cys) + AMP + diphosphate. In Caldicellulosiruptor saccharolyticus (strain ATCC 43494 / DSM 8903 / Tp8T 6331), this protein is Cysteine--tRNA ligase.